Consider the following 529-residue polypeptide: Delayed-rectifier potassium channel regulatory subunit KCNS1 (529 aa).

Residues 1–217 (MLMLLVRGTH…LTMENPGYSL (217 aa)) lie on the Cytoplasmic side of the membrane. The chain crosses the membrane as a helical span at residues 218–239 (PSKLFSCVSISVVLASIAAMCI). Topologically, residues 240–270 (HSLPEYQAREAAAAVAAVAAGRSPEGVRDDP) are extracellular. The chain crosses the membrane as a helical span at residues 271 to 293 (VLRRLEYFCIAWFSFEVSSRLLL). Topologically, residues 294-304 (APSTRNFFCHP) are cytoplasmic. The helical transmembrane segment at 305-322 (LNLIDIVSVLPFYLTLLA) threads the bilayer. Over 323–340 (GVALGDQGGTGGKELGHL) the chain is Extracellular. Residues 341–361 (GKVVQVFRLMRIFRVLKLARH) traverse the membrane as a helical; Voltage-sensor segment. Topologically, residues 362–376 (STGLRSLGATLKHSY) are cytoplasmic. A helical membrane pass occupies residues 377 to 398 (REVGILLLYLAVGVSVFSGVAY). At 399–411 (TAEKEEDVGFNTI) the chain is on the extracellular side. The helical intramembrane region spans 412 to 423 (PACWWWGTVSMT). Positions 424–429 (TVGYGD) match the Selectivity filter motif. An intramembrane segment occupies 424 to 431 (TVGYGDVV). Topologically, residues 432–438 (PVTVAGK) are extracellular. Residues 439-467 (LAASGCILGGILVVALPITIIFNKFSHFY) traverse the membrane as a helical segment. At 468-529 (RRQKALEAAV…PSEPPHPQMY (62 aa)) the chain is on the cytoplasmic side. A disordered region spans residues 494 to 529 (GVSEASLETSRETSQEGRSADLETQAPSEPPHPQMY). Basic and acidic residues predominate over residues 502-514 (TSRETSQEGRSAD).

The protein belongs to the potassium channel family. S (TC 1.A.1.2) subfamily. Kv9.1/KCNS1 sub-subfamily. In terms of assembly, heterotetramer with KCNB1. Heterotetramer with KCNB2. Does not form homomultimers.

The protein resides in the cell membrane. Functionally, potassium channel regulatory subunit that modulate the delayed rectifier voltage-gated potassium channel activity of KCNB1 and KCNB2 by altering their kinetics, expression levels, and shifting the half-inactivation potential to more polarized values. While it does not form functional channels on its own, it can form functional heterotetrameric channels with KCNB1 and KCNB2. Each regulatory subunit has unique regulatory properties that can lead to extensive inhibition, significant changes in kinetics, and/or substantial shifts in the voltage dependencies of the inactivation process. This Chlorocebus aethiops (Green monkey) protein is Delayed-rectifier potassium channel regulatory subunit KCNS1.